Here is a 184-residue protein sequence, read N- to C-terminus: Cell number regulator 5 (184 aa).

A helical transmembrane segment spans residues 91-111 (MLWGLLTSLCCVFTGGLVLAV). The disordered stretch occupies residues 162–184 (RTGSGSSPAPNVTPPPVQTMDEL).

It belongs to the cornifelin family. As to expression, expressed in roots, leaves, stalks, immature ears, endosperm and pollen.

The protein localises to the membrane. The chain is Cell number regulator 5 (CNR5) from Zea mays (Maize).